The primary structure comprises 396 residues: Putative pyridoxal phosphate-dependent acyltransferase (396 aa).

Position 111-112 (glycine 111–phenylalanine 112) interacts with pyridoxal 5'-phosphate. Histidine 136 is a binding site for substrate. Residues serine 186, aspartate 211–histidine 214, and threonine 241–lysine 244 each bind pyridoxal 5'-phosphate. Lysine 244 bears the N6-(pyridoxal phosphate)lysine mark. Substrate is bound at residue threonine 358.

It belongs to the class-II pyridoxal-phosphate-dependent aminotransferase family. As to quaternary structure, homodimer. Requires pyridoxal 5'-phosphate as cofactor.

The polypeptide is Putative pyridoxal phosphate-dependent acyltransferase (Bacillus anthracis).